We begin with the raw amino-acid sequence, 882 residues long: MEHMKSAEIRRRFLDFFAERDHRIYPSSSLIPHDDPTVLLTTAGVQQFIPYFLGQEKPPHPRAASVQKCFRTQDLEEVGDPSHLTFFEMLGNFSFGDYFKKEAIGWAWEFLTEGLGIPPERLWVTIFEGDENAPEDLEAKRFWMEVGVPEHKIFGLPKSENWWGPAGETGPCGPCSEIYYDYGEEFGPGDPLEDARYGPGGEEGDARFLEVWNLVFNQYEQLRDGSLRPLEQTGIDTGMGLERIAAVMQGARSVYETDLYAPVIERAREYTGVALGDGEETDRALRILADHARGMAFLIADGVRPGNQRREYVLRRIIRRATREAYGRFGLDAGRIASLAETVADYMGGFWGELREARDEIRRVVESEAARFIDIYHSGMRLLEAEISRLEGGRFPGEVAFTLHDTYGFPVEVTREVLAERGISLDEAGFRRAMERQRERAREALEGHERAVAAFRDREIRSRFVGYEREQAETRILAIEPVPDAEGELYLVLEENPFYATGGGQVADTGWISSEKGQLEVVDAIPAGDYQVLRARVERGRFEAGDEVVASINRVRRQQIEANHTATHILHWALRAVLGKEVVQAGSYVGPDRLRFDYRYSGRVTEEELARVQELCLLKITENQPVRYYTTTLEEARKLGAIMLFGEKYGELVRVVEVDGFSRELCGGTHVRGTAEIGAFKITSNRRHGADLYRIEVITGREALYYLTRAAETAERLAAELRLPGVEELPEAVSRLREELQQAREELRQQALKRGLEEVGSLVENAESIDGTKVVTGRVAAADVRDLRQISDDVRNRVGGPVAVVLAADLDGKAVLVANFHPEVSKRVKAGDVVREAAGILGGGGGGSPTMAQAGGGNLEAIPAALERVRQILSRELSGREA.

Histidine 564, histidine 568, cysteine 666, and histidine 670 together coordinate Zn(2+).

It belongs to the class-II aminoacyl-tRNA synthetase family. Requires Zn(2+) as cofactor.

It is found in the cytoplasm. It carries out the reaction tRNA(Ala) + L-alanine + ATP = L-alanyl-tRNA(Ala) + AMP + diphosphate. In terms of biological role, catalyzes the attachment of alanine to tRNA(Ala) in a two-step reaction: alanine is first activated by ATP to form Ala-AMP and then transferred to the acceptor end of tRNA(Ala). Also edits incorrectly charged Ser-tRNA(Ala) and Gly-tRNA(Ala) via its editing domain. The protein is Alanine--tRNA ligase of Rubrobacter xylanophilus (strain DSM 9941 / JCM 11954 / NBRC 16129 / PRD-1).